We begin with the raw amino-acid sequence, 972 residues long: Aminopeptidase N (972 aa).

Residues T2–R17 are Cytoplasmic-facing. A helical; Signal-anchor for type II membrane protein membrane pass occupies residues L18–F39. Residues T40–L972 are Extracellular-facing. The span at S47–N62 shows a compositional bias: basic and acidic residues. Positions S47–A66 are disordered. An N-linked (GlcNAc...) asparagine glycan is attached at N99. Residue E208 participates in substrate binding. Residue N227 is glycosylated (N-linked (GlcNAc...) asparagine). G343 to N347 serves as a coordination point for substrate. Zn(2+) is bound at residue H379. E380 functions as the Proton acceptor in the catalytic mechanism. Zn(2+)-binding residues include H383 and E402. An N-linked (GlcNAc...) asparagine glycan is attached at N549. 2 disulfide bridges follow: C759-C766 and C804-C840. N-linked (GlcNAc...) asparagine glycosylation occurs at N858.

It belongs to the peptidase M1 family. It depends on Zn(2+) as a cofactor.

It is found in the membrane. It catalyses the reaction Release of an N-terminal amino acid, Xaa-|-Yaa- from a peptide, amide or arylamide. Xaa is preferably Ala, but may be most amino acids including Pro (slow action). When a terminal hydrophobic residue is followed by a prolyl residue, the two may be released as an intact Xaa-Pro dipeptide.. In Haemonchus contortus (Barber pole worm), this protein is Aminopeptidase N.